Here is a 773-residue protein sequence, read N- to C-terminus: Disintegrin and metalloproteinase domain-containing protein 11 (773 aa).

The first 24 residues, 1–24 (MRRLRRWAIAALLLLPLLPPPGLG), serve as a signal peptide directing secretion. The propeptide occupies 25 to 229 (ALGPRGALHW…PNWPKLRRKR (205 aa)). The segment at 36–82 (SSAHVGSPESPEGSEVTEPSRLVRQSSGGEVRKPQLDTRVRQDPPRG) is disordered. Residues 65–79 (EVRKPQLDTRVRQDP) show a composition bias toward basic and acidic residues. Residues asparagine 100 and asparagine 167 are each glycosylated (N-linked (GlcNAc...) asparagine). Residues 230–738 (QVRRGHPTVH…ERYKGPSGTN (509 aa)) are Extracellular-facing. A Peptidase M12B domain is found at 243 to 442 (KYVELIVIND…GGGSCLFNKP (200 aa)). Residues 336–773 (GRTFQSTSSG…NIRRGRSGGA (438 aa)) form a required for localization to cerebellar cortex basket cell terminals. Also required for localization of KCNA1, KCNA2, DLG4 and ADAM22 to cerebellar cortex basket cell terminal perisomatic axons and pinceaux region. 4 disulfides stabilise this stretch: cysteine 353-cysteine 437, cysteine 396-cysteine 421, cysteine 398-cysteine 405, and cysteine 507-cysteine 527. Residues 448 to 535 (PPECGNGFVE…QCPPNLHKLD (88 aa)) enclose the Disintegrin domain. 2 N-linked (GlcNAc...) asparagine glycosylation sites follow: asparagine 609 and asparagine 677. Disulfide bonds link cysteine 681–cysteine 696, cysteine 690–cysteine 702, and cysteine 704–cysteine 713. Residues 681–713 (CPGSGERRICSHHGVCSNEGKCICQPDWTGKDC) enclose the EGF-like domain. Residues 739 to 759 (IIIGSIAGAVLVAAIVLGGTG) form a helical membrane-spanning segment. Residues 760-773 (WGFKNIRRGRSGGA) lie on the Cytoplasmic side of the membrane.

In terms of assembly, interacts with LGI1 and LGI4. Interacts with KCNA1/KV1.1, KCNA2/KV1.2, DLG4/PSD-95 and ADAM22. Post-translationally, the precursor is cleaved by a furin endopeptidase. In terms of tissue distribution, abundantly expressed in cerebellar cortex basket cell terminals and pinceaux, weakly expressed in Purkinje cells (at protein level). Weakly expressed in the heart. Abundantly in expressed in neurons throughout the central nervous system including the telencephalon, diencephalic and brainstem nuclei, cerebellum and spinal cord. Expressed in the peripheral nervous system trigeminal and dorsal root ganglia. Expressed in the ganglion and bipolar cells of the retinae and weakly in the cornea of the eyes. Expressed in the hepatocytes of the parenchyma and hepatic lobules of the liver. Expressed in distinct focal areas in the juxtamedullary cortex of the kidney. Expressed in spermatocytes in the seminiferous tubules of the testes. Expressed in the stratum spinosum of the stratified squamous epithelia of the tongue and esophagus.

The protein localises to the presynaptic cell membrane. The protein resides in the perikaryon. Its subcellular location is the cell projection. It localises to the axon. Its function is as follows. Probable ligand for integrin in the brain. This is a non catalytic metalloprotease-like protein. Required for localization of the potassium channel subunit proteins KCNA1/KV1.1 and KCNA2/KV1.2 at cerebellar cortex basket cell distal terminals, is thereby involved in ephaptic inhibitory synchronization of Purkinje cell firing and response to stress. Plays a role in spatial learning and motor coordination. Involved in the nociceptive pain response to chemical-derived stimulation. The polypeptide is Disintegrin and metalloproteinase domain-containing protein 11 (Adam11) (Mus musculus (Mouse)).